Consider the following 221-residue polypeptide: Large ribosomal subunit protein uL4 (221 aa).

The interval 56 to 83 is disordered; it reads HATKTRGMVSGGGRKPWKQKGTGRARQG.

This sequence belongs to the universal ribosomal protein uL4 family. In terms of assembly, part of the 50S ribosomal subunit.

In terms of biological role, one of the primary rRNA binding proteins, this protein initially binds near the 5'-end of the 23S rRNA. It is important during the early stages of 50S assembly. It makes multiple contacts with different domains of the 23S rRNA in the assembled 50S subunit and ribosome. Its function is as follows. Forms part of the polypeptide exit tunnel. The protein is Large ribosomal subunit protein uL4 of Bifidobacterium adolescentis (strain ATCC 15703 / DSM 20083 / NCTC 11814 / E194a).